We begin with the raw amino-acid sequence, 261 residues long: Cytochrome c oxidase subunit 3 (261 aa).

Residues 1–15 are Mitochondrial matrix-facing; that stretch reads MTHQTHAYHMVNPSP. The helical transmembrane segment at 16–34 threads the bilayer; it reads WPLTGALSALLMTSGLIMW. The Mitochondrial intermembrane segment spans residues 35–40; sequence FHFNST. A helical transmembrane segment spans residues 41–66; the sequence is TLLTLGLTTNMLTMYQWWRDVIREST. Residues 67–72 are Mitochondrial matrix-facing; that stretch reads FQGHHT. The helical transmembrane segment at 73–105 threads the bilayer; that stretch reads PTVQKGLRYGMILFIISEVLFFTGFFWAFYHSS. Topologically, residues 106-128 are mitochondrial intermembrane; the sequence is LAPTPELGGCWPPTGIHPLNPLE. Residues 129 to 152 traverse the membrane as a helical segment; the sequence is VPLLNTSVLLASGVSITWAHHSLM. At 153-155 the chain is on the mitochondrial matrix side; that stretch reads EGN. A helical membrane pass occupies residues 156–183; that stretch reads RNPMLQALFITIALGIYFTLLQASEYYE. Topologically, residues 184 to 190 are mitochondrial intermembrane; sequence APFTISD. Residues 191-223 traverse the membrane as a helical segment; sequence GVYGSTFFVATGFHGLHVIIGSTFLIVCFFRQL. The Mitochondrial matrix portion of the chain corresponds to 224 to 232; it reads KFHFTSNHH. Residues 233–256 form a helical membrane-spanning segment; the sequence is FGFEAAAWYWHFVDVVWLFLYVSI. At 257 to 261 the chain is on the mitochondrial intermembrane side; sequence YWWGS.

It belongs to the cytochrome c oxidase subunit 3 family. In terms of assembly, component of the cytochrome c oxidase (complex IV, CIV), a multisubunit enzyme composed of 14 subunits. The complex is composed of a catalytic core of 3 subunits MT-CO1, MT-CO2 and MT-CO3, encoded in the mitochondrial DNA, and 11 supernumerary subunits COX4I, COX5A, COX5B, COX6A, COX6B, COX6C, COX7A, COX7B, COX7C, COX8 and NDUFA4, which are encoded in the nuclear genome. The complex exists as a monomer or a dimer and forms supercomplexes (SCs) in the inner mitochondrial membrane with NADH-ubiquinone oxidoreductase (complex I, CI) and ubiquinol-cytochrome c oxidoreductase (cytochrome b-c1 complex, complex III, CIII), resulting in different assemblies (supercomplex SCI(1)III(2)IV(1) and megacomplex MCI(2)III(2)IV(2)).

Its subcellular location is the mitochondrion inner membrane. It carries out the reaction 4 Fe(II)-[cytochrome c] + O2 + 8 H(+)(in) = 4 Fe(III)-[cytochrome c] + 2 H2O + 4 H(+)(out). Functionally, component of the cytochrome c oxidase, the last enzyme in the mitochondrial electron transport chain which drives oxidative phosphorylation. The respiratory chain contains 3 multisubunit complexes succinate dehydrogenase (complex II, CII), ubiquinol-cytochrome c oxidoreductase (cytochrome b-c1 complex, complex III, CIII) and cytochrome c oxidase (complex IV, CIV), that cooperate to transfer electrons derived from NADH and succinate to molecular oxygen, creating an electrochemical gradient over the inner membrane that drives transmembrane transport and the ATP synthase. Cytochrome c oxidase is the component of the respiratory chain that catalyzes the reduction of oxygen to water. Electrons originating from reduced cytochrome c in the intermembrane space (IMS) are transferred via the dinuclear copper A center (CU(A)) of subunit 2 and heme A of subunit 1 to the active site in subunit 1, a binuclear center (BNC) formed by heme A3 and copper B (CU(B)). The BNC reduces molecular oxygen to 2 water molecules using 4 electrons from cytochrome c in the IMS and 4 protons from the mitochondrial matrix. In Madoqua guentheri (Guenther's dik-dik), this protein is Cytochrome c oxidase subunit 3 (MT-CO3).